The primary structure comprises 374 residues: Queuine tRNA-ribosyltransferase (374 aa).

D89 (proton acceptor) is an active-site residue. Substrate is bound by residues 89–93 (DSGGF), D143, Q187, and G214. Positions 245 to 251 (GVGKPED) are RNA binding. D264 serves as the catalytic Nucleophile. The segment at 269–273 (TRNAR) is RNA binding; important for wobble base 34 recognition. C302, C304, C307, and H333 together coordinate Zn(2+).

This sequence belongs to the queuine tRNA-ribosyltransferase family. Homodimer. Within each dimer, one monomer is responsible for RNA recognition and catalysis, while the other monomer binds to the replacement base PreQ1. The cofactor is Zn(2+).

It catalyses the reaction 7-aminomethyl-7-carbaguanine + guanosine(34) in tRNA = 7-aminomethyl-7-carbaguanosine(34) in tRNA + guanine. Its pathway is tRNA modification; tRNA-queuosine biosynthesis. In terms of biological role, catalyzes the base-exchange of a guanine (G) residue with the queuine precursor 7-aminomethyl-7-deazaguanine (PreQ1) at position 34 (anticodon wobble position) in tRNAs with GU(N) anticodons (tRNA-Asp, -Asn, -His and -Tyr). Catalysis occurs through a double-displacement mechanism. The nucleophile active site attacks the C1' of nucleotide 34 to detach the guanine base from the RNA, forming a covalent enzyme-RNA intermediate. The proton acceptor active site deprotonates the incoming PreQ1, allowing a nucleophilic attack on the C1' of the ribose to form the product. After dissociation, two additional enzymatic reactions on the tRNA convert PreQ1 to queuine (Q), resulting in the hypermodified nucleoside queuosine (7-(((4,5-cis-dihydroxy-2-cyclopenten-1-yl)amino)methyl)-7-deazaguanosine). The protein is Queuine tRNA-ribosyltransferase of Psychromonas ingrahamii (strain DSM 17664 / CCUG 51855 / 37).